We begin with the raw amino-acid sequence, 507 residues long: tRNA (guanine(6)-N(2))-methyltransferase THUMP3 (507 aa).

In terms of domain architecture, THUMP spans 165-285 (KIDQRNVKKE…DNEVIVGIAL (121 aa)).

The protein belongs to the methyltransferase superfamily. In terms of assembly, part of the heterodimeric THUMPD3-TRM112 methyltransferase complex; this complex forms an active tRNA methyltransferase, where TRMT112 acts as an activator of the catalytic subunit THUMPD3.

It is found in the cytoplasm. The catalysed reaction is guanosine(6) in tRNA + S-adenosyl-L-methionine = N(2)-methylguanosine(6) in tRNA + S-adenosyl-L-homocysteine + H(+). It carries out the reaction guanosine(7) in tRNA + S-adenosyl-L-methionine = N(2)-methylguanosine(7) in tRNA + S-adenosyl-L-homocysteine + H(+). In terms of biological role, catalytic subunit of the THUMPD3-TRM112 methyltransferase complex, that specifically mediates the S-adenosyl-L-methionine-dependent N(2)-methylation of guanosine nucleotide at position 6 (m2G6) in tRNAs. This is one of the major tRNA (guanine-N(2))-methyltransferases. Also catalyzes the S-adenosyl-L-methionine-dependent N(2)-methylation of guanosine nucleotide at position 7 of tRNA(Trp). This Homo sapiens (Human) protein is tRNA (guanine(6)-N(2))-methyltransferase THUMP3.